We begin with the raw amino-acid sequence, 1107 residues long: MNKNQNDWKVELRKATRSSLISITNETDFQLQRISCKLQQGMLRLIPPEIIPPKSSIEFGTESNAFMTGTKGSVIYIVLPPSSSPINVGSIQSLTHLQSLKLWDPLVYIIIEWSTPYWSQHSCSIQVQPQQNSSLLNVKSNLSQREINKQIHSEVLMFIHNNDSNGEIQFKIYKNSLSNSGNGSSGGNNNNNNNSLNNSNNSIGSSGGNGGGGSNGSSPSMSPQFTSISKTNSPQIINTSSNNLNSSSGNNNKPIFSIVDNDYTSSQSTSSIPVVAGINSNSNSNTSGSGSTSISSPNSSFSSSLPSFFSNNFPLPWSNDGFGVDGGWKANVKRGSRGQFITIRNNTSKHLIRRNQTCLNSGRWCEPPPEGIPPNSMIEFGSVSSGFTTGTDGVIHYHSQGSKSDFRFQFNNPLMGKSSFTYHCPNGFNVEEKYTDGNISSVSFTINEGDSQTIPKQIPDSPLPIPPIKTDPKQVFINDDSIRIFSFNVGSINVKESGKELMNINNNNNNNNSNNNNNNNDQNKDKDNQMLNNSNLINKRIEQISKNLINFSEKYDIILLQEVFLDSSKDILIKNLKIYYPYIIDRCGENSGLFFASRFPPLWNEFRQFNNGIGSDVKYGKGVQGVKLDISTIKENTYLYVFNANLQANPDNSIAWQMVNGDDKQRKAATVRTLQLQSIRDFISTELAMQSSTIANSALLLVGDFNLNAEVEQVISDHESNSITLSQIIPELAKKINSKEITLTFSYQLLEYLNDLNIPMRYLGILRSQLQNNRMKSLVLTEMITYIIKKDIIEHLTQRHNQYQSNINEDEQIYREVVLETFNLIFHYTRKDCIQFWRHHLRKRLRSEFSSSLSEIEQQDWVDLRTHVINLQLFTSLKYSLEITFNPKAVFQIMKGSRINTKEIIPIPLILPEQIEEIILPPLTSYWGSDSNTDINYFTNIDHLKEQQKKQAQLQQLQQQQAQQQQQAQQQTQQQQNSNINIINTIESSQIQQNNNIQIYLKQTDEYNNMLKILGNPVDLFRESNPFSPGYTIHQSLNQRVEKPSLKERVDYILNFKLSPNFGDHEGRNQLLKLECTETNIVPMGATPQTRLSNHFALECILHIKKK.

Positions 180-204 (SGNGSSGGNNNNNNNSLNNSNNSIG) are enriched in low complexity. Disordered regions lie at residues 180 to 251 (SGNG…SGNN) and 501 to 530 (LMNI…DNQM). The segment covering 205 to 215 (SSGGNGGGGSN) has biased composition (gly residues). Residues 219-237 (PSMSPQFTSISKTNSPQII) are compositionally biased toward polar residues. Low complexity-rich tracts occupy residues 238-251 (NTSS…SGNN) and 501-521 (LMNI…NNND). Coiled coils occupy residues 789-816 (KKDI…IYRE) and 940-1012 (NIDH…NMLK).

This is an uncharacterized protein from Dictyostelium discoideum (Social amoeba).